Consider the following 296-residue polypeptide: Circadian clock oscillator protein KaiA (296 aa).

Residues 2 to 133 (ARPGLTIALL…LRQGRADGRS (132 aa)) are psR domain, binds oxidized quinones. One can recognise a KaiA N-terminal domain in the interval 2–152 (ARPGLTIALL…KLSRRLQERL (151 aa)). Positions 153–161 (GYLGVFYKR) are flexible linker. The 109-residue stretch at 162 to 270 (DPSRFLGSLP…CEMYRRSIPP (109 aa)) folds into the KaiA C-terminal domain.

As to quaternary structure, homodimer. The KaiABC complex composition changes during the circadian cycle to control KaiC phosphorylation. Complexes KaiC(6), KaiA(2-4):KaiC(6), KaiB(6):KaiC(6) and KaiC(6):KaiB(6):KaiA(12) are among the most important forms, many form cooperatively. KaiA and CikA bind to the same region of the KaiB(fs) form and therefore compete.

In terms of biological role, key component of the KaiABC oscillator complex, which constitutes the main circadian regulator in cyanobacteria. Complex composition changes during the circadian cycle to control KaiC phosphorylation. KaiA stimulates KaiC autophosphorylation, while KaiB sequesters KaiA, leading to KaiC autodephosphorylation. KaiA binding to the KaiC CII domain during the subjective day yields KaiA(2-4):KaiC(6) complexes which stimulate KaiC autophosphorylation. Phospho-Ser-431 KaiC accumulation triggers binding of KaiB during the subjective night to form the KaiB(6):KaiC(6) complex, leading to changes in the output regulators CikA and SasA. KaiB(6):KaiC(6) formation exposes a site for KaiA binding on KaiB that sequesters KaiA from KaiC's CII domain, making the KaiC(6):KaiB(6):KaiA(12) complex resulting in KaiC autodephosphorylation. Complete dephosphorylation of KaiC leads to dissociation of KaiA(2):KaiB(1), completing 1 cycle of the Kai oscillator. Its function is as follows. Binds oxidized quinones via the N-terminal PsR domain, allowing it to sense redox changes and possibly mediate clock input. The polypeptide is Circadian clock oscillator protein KaiA (Parasynechococcus marenigrum (strain WH8102)).